Here is a 109-residue protein sequence, read N- to C-terminus: Small ribosomal subunit protein bS6 (109 aa).

Belongs to the bacterial ribosomal protein bS6 family.

Functionally, binds together with bS18 to 16S ribosomal RNA. This chain is Small ribosomal subunit protein bS6, found in Anaplasma marginale (strain St. Maries).